We begin with the raw amino-acid sequence, 246 residues long: NAD-dependent protein deacetylase (246 aa).

In terms of domain architecture, Deacetylase sirtuin-type spans 1 to 246 (MKKPDIQQLK…VIEEIVNSNS (246 aa)). Positions 25, 36, 37, 106, 108, 109, and 124 each coordinate NAD(+). F36 contributes to the nicotinamide binding site. 2 residues coordinate nicotinamide: I108 and D109. H124 serves as the catalytic Proton acceptor. The Zn(2+) site is built by C132, C135, C152, and C155. NAD(+) contacts are provided by S193, S194, N216, and D233.

This sequence belongs to the sirtuin family. Class U subfamily. It depends on Zn(2+) as a cofactor.

The protein localises to the cytoplasm. The catalysed reaction is N(6)-acetyl-L-lysyl-[protein] + NAD(+) + H2O = 2''-O-acetyl-ADP-D-ribose + nicotinamide + L-lysyl-[protein]. Functionally, NAD-dependent protein deacetylase which modulates the activities of several enzymes which are inactive in their acetylated form. This chain is NAD-dependent protein deacetylase, found in Staphylococcus epidermidis (strain ATCC 12228 / FDA PCI 1200).